Here is an 82-residue protein sequence, read N- to C-terminus: Cytochrome b559 subunit alpha (82 aa).

The helical transmembrane segment at 22 to 36 (VIHAITLPSIFLAGF) threads the bilayer. Residue His24 coordinates heme.

It belongs to the PsbE/PsbF family. As to quaternary structure, heterodimer of an alpha subunit and a beta subunit. PSII is composed of 1 copy each of membrane proteins PsbA, PsbB, PsbC, PsbD, PsbE, PsbF, PsbH, PsbI, PsbJ, PsbK, PsbL, PsbM, PsbT, PsbX, PsbY, PsbZ, Psb30/Ycf12, peripheral proteins PsbO, CyanoQ (PsbQ), PsbU, PsbV and a large number of cofactors. It forms dimeric complexes. Heme b is required as a cofactor.

The protein resides in the cellular thylakoid membrane. In terms of biological role, this b-type cytochrome is tightly associated with the reaction center of photosystem II (PSII). PSII is a light-driven water:plastoquinone oxidoreductase that uses light energy to abstract electrons from H(2)O, generating O(2) and a proton gradient subsequently used for ATP formation. It consists of a core antenna complex that captures photons, and an electron transfer chain that converts photonic excitation into a charge separation. This chain is Cytochrome b559 subunit alpha, found in Synechococcus sp. (strain WH7803).